We begin with the raw amino-acid sequence, 165 residues long: Methyl-coenzyme M reductase II operon protein D (165 aa).

As to quaternary structure, MCR is composed of three subunits: alpha, beta, and gamma. The function of protein D is not known.

In Methanothermus fervidus (strain ATCC 43054 / DSM 2088 / JCM 10308 / V24 S), this protein is Methyl-coenzyme M reductase II operon protein D (mrtD).